The primary structure comprises 404 residues: Argininosuccinate synthase (404 aa).

ATP is bound by residues 10–18 (AYSGGLDTS) and Ala37. Tyr90 and Ser95 together coordinate L-citrulline. Residue Gly120 coordinates ATP. L-aspartate-binding residues include Thr122, Asn126, and Asp127. Asn126 is an L-citrulline binding site. The L-citrulline site is built by Arg130, Ser180, Ser189, Glu265, and Tyr277.

This sequence belongs to the argininosuccinate synthase family. Type 1 subfamily. As to quaternary structure, homotetramer.

It localises to the cytoplasm. It catalyses the reaction L-citrulline + L-aspartate + ATP = 2-(N(omega)-L-arginino)succinate + AMP + diphosphate + H(+). It participates in amino-acid biosynthesis; L-arginine biosynthesis; L-arginine from L-ornithine and carbamoyl phosphate: step 2/3. The protein is Argininosuccinate synthase of Helicobacter hepaticus (strain ATCC 51449 / 3B1).